The sequence spans 363 residues: Pyrimidine monooxygenase RutA (363 aa).

FMN is bound by residues 49–50, Asn-115, Glu-124, 140–141, and Ser-190; these read IK and RY.

This sequence belongs to the NtaA/SnaA/DszA monooxygenase family. RutA subfamily.

The enzyme catalyses uracil + FMNH2 + NADH + O2 = (Z)-3-ureidoacrylate + FMN + NAD(+) + H2O + H(+). It carries out the reaction thymine + FMNH2 + NADH + O2 = (Z)-2-methylureidoacrylate + FMN + NAD(+) + H2O + H(+). Catalyzes the pyrimidine ring opening between N-3 and C-4 by an unusual flavin hydroperoxide-catalyzed mechanism, adding oxygen atoms in the process to yield ureidoacrylate peracid, that immediately reacts with FMN forming ureidoacrylate and FMN-N(5)-oxide. The FMN-N(5)-oxide reacts spontaneously with NADH to produce FMN. Requires the flavin reductase RutF to regenerate FMN in vivo. In Escherichia coli (strain SMS-3-5 / SECEC), this protein is Pyrimidine monooxygenase RutA.